Consider the following 88-residue polypeptide: MSDRPFTLADLQRILVEAAGADESAGPDDILDTTFALLGYESLALLETGGCIEREIGISLDDDTLTDALTPRELIDHVNERLAAARVA.

The Carrier domain maps to Pro-5 to Leu-82. Ser-42 carries the post-translational modification O-(pantetheine 4'-phosphoryl)serine.

Post-translationally, 4'-phosphopantetheine is transferred from CoA to a specific serine of the apo-ACP-like protein.

It participates in antifungal biosynthesis; monensin biosynthesis. Acyl carrier protein. In Streptomyces virginiae (Streptomyces cinnamonensis), this protein is Monensin polyketide synthase acyl carrier protein.